A 299-amino-acid polypeptide reads, in one-letter code: tRNA uridine(34) hydroxylase (299 aa).

The 95-residue stretch at 132 to 226 (ASRPVVMLDT…YFEEVGGAHY (95 aa)) folds into the Rhodanese domain. The active-site Cysteine persulfide intermediate is the C186.

The protein belongs to the TrhO family.

The catalysed reaction is uridine(34) in tRNA + AH2 + O2 = 5-hydroxyuridine(34) in tRNA + A + H2O. Its function is as follows. Catalyzes oxygen-dependent 5-hydroxyuridine (ho5U) modification at position 34 in tRNAs. This chain is tRNA uridine(34) hydroxylase, found in Burkholderia pseudomallei (strain K96243).